We begin with the raw amino-acid sequence, 121 residues long: Large ribosomal subunit protein uL14c (121 aa).

Belongs to the universal ribosomal protein uL14 family. In terms of assembly, part of the 50S ribosomal subunit.

The protein resides in the plastid. It is found in the chloroplast. In terms of biological role, binds to 23S rRNA. The chain is Large ribosomal subunit protein uL14c from Emiliania huxleyi (Coccolithophore).